A 447-amino-acid polypeptide reads, in one-letter code: Putative FBD-associated F-box protein At1g61330 (447 aa).

The region spanning 10–57 (KLIKRLSDELVECILSFLPVQSTLQHRVLSKRYRDTWKLSRDLDFSGI) is the F-box domain. Residues 384-416 (VKIIGYKGHWHELDIVEFFVKNAPSLKRLELQM) form the FBD domain.

This is Putative FBD-associated F-box protein At1g61330 from Arabidopsis thaliana (Mouse-ear cress).